The following is a 1283-amino-acid chain: uncharacterized protein (1283 aa).

The 37-residue stretch at 10–46 (ACPPNTFTCADGSCIPSDWKGDGEKDCEDGSDEEAVT) folds into the LDL-receptor class A domain. 2 disulfide bridges follow: C11/C23 and C18/C36. The disordered stretch occupies residues 27–47 (DWKGDGEKDCEDGSDEEAVTG). A compositionally biased stretch (acidic residues) spans 34 to 45 (KDCEDGSDEEAV). A glycan (N-linked (GlcNAc...) asparagine) is linked at N79. Positions 236–278 (STTLIVDETTESTSASAEDDDDDVLTTNTSEESTATTAHDEEV) are disordered. Over residues 261–272 (TTNTSEESTATT) the composition is skewed to low complexity. Residues 332–389 (YQKTLEKEKCAIRNATSKCEALISYNNNLDCAIVTMNDECEVDAQNLVVELQEEVNDL) are a coiled coil. 2 disordered regions span residues 621 to 651 (ARPT…VASS) and 1005 to 1046 (SSST…PTDG). Pro residues predominate over residues 626-647 (VTMPPRAPTAKPLPIPSAPTPP). A compositionally biased stretch (low complexity) spans 1005-1015 (SSSTMVSTSSE). The span at 1016-1026 (SDSESAPEQET) shows a compositional bias: acidic residues. The span at 1027–1044 (EPTVPSTTETTESPSTPT) shows a compositional bias: low complexity. Residues 1263–1283 (VQSSVSFHIILAALIPFFALF) traverse the membrane as a helical segment.

The protein resides in the membrane. This is an uncharacterized protein from Caenorhabditis elegans.